Reading from the N-terminus, the 262-residue chain is Lysine 5,6-aminomutase beta subunit (262 aa).

One can recognise a B12-binding domain in the interval 120–262; that stretch reads KIVVVGASTG…VKTLNDRMNS (143 aa). Residues 130 to 136 and His-133 contribute to the adenosylcob(III)alamin site; that span reads TDAHTVG. At Lys-144 the chain carries N6-(pyridoxal phosphate)lysine. Adenosylcob(III)alamin-binding positions include 185 to 192, 219 to 223, and 239 to 244; these read LVSQTVTQ, LCGGP, and FGPGRF.

Belongs to the KamE family. As to quaternary structure, heterotetramer of 2 alpha and 2 beta subunits. It depends on adenosylcob(III)alamin as a cofactor. Pyridoxal 5'-phosphate is required as a cofactor.

The enzyme catalyses (3S)-3,6-diaminohexanoate = (3S,5S)-3,5-diaminohexanoate. It catalyses the reaction D-lysine = (2R,5S)-2,5-diaminohexanoate. It participates in amino-acid metabolism; lysine degradation. Rapidly inactivated in the presence of D-lysine and to a lesser extent in the absence of adenosylcobalamin (Adocbl). Activity is stable in the presence of Adocbl when D-lysine is absent. Adocbl imparts thermal stability at 37 degrees Celsius. Its function is as follows. Catalyzes the migration of the L-beta-lysine and D-lysine epsilon amino group to the delta carbon to produce 3,5-diaminohexanoate and 2,5-diaminohexanoate, respectively. This is Lysine 5,6-aminomutase beta subunit (kamE) from Acetoanaerobium sticklandii (strain ATCC 12662 / DSM 519 / JCM 1433 / CCUG 9281 / NCIMB 10654 / HF) (Clostridium sticklandii).